Reading from the N-terminus, the 257-residue chain is UPF0246 protein KPK_4750 (257 aa).

This sequence belongs to the UPF0246 family.

The polypeptide is UPF0246 protein KPK_4750 (Klebsiella pneumoniae (strain 342)).